A 187-amino-acid chain; its full sequence is Large ribosomal subunit protein uL5 (187 aa).

This sequence belongs to the universal ribosomal protein uL5 family. As to quaternary structure, part of the 50S ribosomal subunit; part of the 5S rRNA/L5/L18/L25 subcomplex. Contacts the 5S rRNA and the P site tRNA. Forms a bridge to the 30S subunit in the 70S ribosome.

Functionally, this is one of the proteins that bind and probably mediate the attachment of the 5S RNA into the large ribosomal subunit, where it forms part of the central protuberance. In the 70S ribosome it contacts protein S13 of the 30S subunit (bridge B1b), connecting the 2 subunits; this bridge is implicated in subunit movement. Contacts the P site tRNA; the 5S rRNA and some of its associated proteins might help stabilize positioning of ribosome-bound tRNAs. The chain is Large ribosomal subunit protein uL5 from Malacoplasma penetrans (strain HF-2) (Mycoplasma penetrans).